The primary structure comprises 346 residues: E3 ubiquitin-protein ligase MARCHF9 (346 aa).

2 disordered regions span residues 20–39 (GGGR…GGCG) and 47–92 (STRD…PGAL). The segment covering 63–75 (PRARGLAGDKEPR) has biased composition (basic and acidic residues). Residues 77 to 90 (GPLPPPAPPLPPPG) are compositionally biased toward pro residues. The segment at 102–162 (DSGLRTPQCR…ELCYFKYQVL (61 aa)) adopts an RING-CH-type zinc-finger fold. C110, C113, C126, C128, H136, C139, C152, and C155 together coordinate Zn(2+). The next 2 membrane-spanning stretches (helical) occupy residues 185–205 (IAAI…LIWS) and 219–239 (LFQI…GLII). 2 disordered regions span residues 273–301 (DAGG…RPPA) and 326–346 (PPDA…VTTV). Positions 284–296 (PRNSRTGPTSGAT) are enriched in polar residues.

As to quaternary structure, homodimer. In terms of tissue distribution, ubiquitously expressed.

It localises to the golgi apparatus membrane. It is found in the lysosome membrane. It catalyses the reaction S-ubiquitinyl-[E2 ubiquitin-conjugating enzyme]-L-cysteine + [acceptor protein]-L-lysine = [E2 ubiquitin-conjugating enzyme]-L-cysteine + N(6)-ubiquitinyl-[acceptor protein]-L-lysine.. The protein operates within protein modification; protein ubiquitination. Its function is as follows. E3 ubiquitin-protein ligase that may mediate ubiquitination of MHC-I, CD4 and ICAM1, and promote their subsequent endocytosis and sorting to lysosomes via multivesicular bodies. E3 ubiquitin ligases accept ubiquitin from an E2 ubiquitin-conjugating enzyme in the form of a thioester and then directly transfer the ubiquitin to targeted substrates. The chain is E3 ubiquitin-protein ligase MARCHF9 from Homo sapiens (Human).